The primary structure comprises 1011 residues: Vacuolar membrane protease (1011 aa).

The Cytoplasmic segment spans residues 1-9; the sequence is MSNPFAFRS. The chain crosses the membrane as a helical span at residues 10-30; it reads AQVTFWTTVVYLALLVPLVVI. At 31–378 the chain is on the vacuolar side; it reads NEGVPPVQPD…TFVLFGLRGM (348 aa). Asn-50 and Asn-106 each carry an N-linked (GlcNAc...) asparagine glycan. Residues His-159 and Asp-171 each coordinate Zn(2+). Residue Glu-205 is the Proton acceptor of the active site. Zn(2+)-binding residues include Glu-206, Glu-231, and His-304. The N-linked (GlcNAc...) asparagine glycan is linked to Asn-331. Residues 379-399 form a helical membrane-spanning segment; it reads FAWSLTVLIVGPLTLFGMMYL. Residues 400–439 lie on the Cytoplasmic side of the membrane; it reads VHKQGKGYAFHTKLRATSDSSSEDGDDEDGEVIRLGGWKG. Residues 440–460 traverse the membrane as a helical segment; the sequence is FFRFPFALIVAGALVTGAALL. At 461–471 the chain is on the vacuolar side; that stretch reads LRKMNPFIIYS. A helical transmembrane segment spans residues 472 to 492; the sequence is SEYAVWAMMISLFYFGFWLIM. The Cytoplasmic segment spans residues 493–505; that stretch reads RGSSYTRPSALHR. Residues 506–526 form a helical membrane-spanning segment; that stretch reads LYVHIWLFILGWVALVFATVL. At 527–536 the chain is on the vacuolar side; it reads EDRMRIASGY. A helical transmembrane segment spans residues 537-557; sequence IFVFWESQVFLATLVAVCELF. The Cytoplasmic portion of the chain corresponds to 558–682; it reads SLPRKIDFAR…WSGPMVTSTW (125 aa). Residues 595 to 609 show a composition bias toward polar residues; sequence EATSPQRAGQSSNSP. Disordered stretches follow at residues 595 to 627 and 650 to 671; these read EATS…LFRK and IMDS…EGEQ. The segment covering 610 to 622 has biased composition (acidic residues); it reads QEDDEDDVPDEET. The chain crosses the membrane as a helical span at residues 683-703; the sequence is ILQFLLLGPFMVILGGQVGLL. At 704-719 the chain is on the vacuolar side; it reads LTSAVNQTGVDGSSLL. N-linked (GlcNAc...) asparagine glycosylation occurs at Asn-709. A helical membrane pass occupies residues 720 to 740; sequence APYLMIAALSAILLMPLSPFI. The Cytoplasmic segment spans residues 741–747; it reads HRVTKHV. Residues 748-768 traverse the membrane as a helical segment; it reads PLFLLAVAFATLIYSLVAFPF. At 769–1011 the chain is on the vacuolar side; the sequence is SPRAPYKTFF…LVEGSKAFKV (243 aa). Asn-872 is a glycosylation site (N-linked (GlcNAc...) asparagine).

This sequence belongs to the peptidase M28 family. The cofactor is Zn(2+).

It is found in the vacuole membrane. In terms of biological role, may be involved in vacuolar sorting and osmoregulation. The chain is Vacuolar membrane protease from Pyricularia oryzae (strain 70-15 / ATCC MYA-4617 / FGSC 8958) (Rice blast fungus).